A 488-amino-acid chain; its full sequence is Glutamyl-tRNA(Gln) amidotransferase subunit B, mitochondrial (488 aa).

The protein belongs to the GatB/GatE family. GatB subfamily. As to quaternary structure, subunit of the heterotrimeric GatFAB amidotransferase (AdT) complex, composed of A, B and F subunits.

The protein resides in the mitochondrion. The enzyme catalyses L-glutamyl-tRNA(Gln) + L-glutamine + ATP + H2O = L-glutaminyl-tRNA(Gln) + L-glutamate + ADP + phosphate + H(+). In terms of biological role, allows the formation of correctly charged Gln-tRNA(Gln) through the transamidation of misacylated Glu-tRNA(Gln) in the mitochondria. The reaction takes place in the presence of glutamine and ATP through an activated gamma-phospho-Glu-tRNA(Gln). This is Glutamyl-tRNA(Gln) amidotransferase subunit B, mitochondrial from Candida albicans (strain SC5314 / ATCC MYA-2876) (Yeast).